The sequence spans 148 residues: MPFTYHRTINFQDTDAAGVVYFANILSICHEGYEASLRTSGISLKEFFTNPSMAFPIVHASVDFLRPLFCGAQVIISLVPQKIGAEKFEINYEIYLADVLVAKAVTRHVCIDANTRSKQELSMEIIQWLDGYRKDTEEVERRKAREVV.

Aspartate 15 is an active-site residue.

The protein belongs to the 4-hydroxybenzoyl-CoA thioesterase family. DHNA-CoA hydrolase subfamily.

The enzyme catalyses 1,4-dihydroxy-2-naphthoyl-CoA + H2O = 1,4-dihydroxy-2-naphthoate + CoA + H(+). It functions in the pathway cofactor biosynthesis; phylloquinone biosynthesis. The protein operates within quinol/quinone metabolism; 1,4-dihydroxy-2-naphthoate biosynthesis; 1,4-dihydroxy-2-naphthoate from chorismate: step 7/7. Functionally, catalyzes the hydrolysis of 1,4-dihydroxy-2-naphthoyl-CoA (DHNA-CoA) to 1,4-dihydroxy-2-naphthoate (DHNA), a reaction involved in phylloquinone (vitamin K1) biosynthesis. This is 1,4-dihydroxy-2-naphthoyl-CoA hydrolase from Nostoc sp. (strain PCC 7120 / SAG 25.82 / UTEX 2576).